A 188-amino-acid chain; its full sequence is Elongation factor P-like protein (188 aa).

This sequence belongs to the elongation factor P family.

The polypeptide is Elongation factor P-like protein (Xanthomonas oryzae pv. oryzae (strain MAFF 311018)).